Reading from the N-terminus, the 74-residue chain is UPF0435 protein Bcer98_0391 (74 aa).

The protein belongs to the UPF0435 family.

This chain is UPF0435 protein Bcer98_0391, found in Bacillus cytotoxicus (strain DSM 22905 / CIP 110041 / 391-98 / NVH 391-98).